Reading from the N-terminus, the 397-residue chain is MQEKIAVLAYSGGLDTSCCLKLLEDKYDYKVISVAVDVGQPEDDLKEPEEKAKKFGVLKHYTIDAKEEFAKDYIFRAIKANALYEGYPLSTALARPLIAIKIAELAQEVGASAISHGCTGKGNDQFRFESVMRAKTPEIEIVAPIRDLNLTRTEEIAYAKEKGIPVPVDLEKPFSIDENLWGRSIEGGILEDPMTETPKECFAWTVDPTDAQDKEEYVEIDFEEGVPVAINGDALEAVSLIRKVNEIAGRNGVGRVDIVEDRVLGLKSRENYECPGAMLLITAHKALEQLVLTREELVFKEMVDSKYADLVYKGLWHEPLRLDLDAFIDKTQTRMNGKVVLKLYKGSMRIAGRESKDAIYNEEMVSFENKEMDQREIVGMVKFHGLQAAIYEGLTRK.

Position 9-17 (9-17 (AYSGGLDTS)) interacts with ATP. Residue Y87 participates in L-citrulline binding. G117 contacts ATP. 3 residues coordinate L-aspartate: T119, N123, and D124. N123 lines the L-citrulline pocket. L-citrulline-binding residues include R127, S175, S184, E260, and Y272.

It belongs to the argininosuccinate synthase family. Type 1 subfamily. In terms of assembly, homotetramer.

The protein resides in the cytoplasm. The enzyme catalyses L-citrulline + L-aspartate + ATP = 2-(N(omega)-L-arginino)succinate + AMP + diphosphate + H(+). Its pathway is amino-acid biosynthesis; L-arginine biosynthesis; L-arginine from L-ornithine and carbamoyl phosphate: step 2/3. In Methanococcus maripaludis (strain DSM 14266 / JCM 13030 / NBRC 101832 / S2 / LL), this protein is Argininosuccinate synthase.